A 223-amino-acid chain; its full sequence is Serine/threonine/tyrosine-interacting protein A (223 aa).

One can recognise a Tyrosine-protein phosphatase domain in the interval glutamate 28–alanine 176.

It belongs to the protein-tyrosine phosphatase family. Non-receptor class subfamily.

In terms of biological role, catalytically inactive phosphatase. The protein is Serine/threonine/tyrosine-interacting protein A (styx-a) of Xenopus laevis (African clawed frog).